Consider the following 179-residue polypeptide: uncharacterized protein (179 aa).

Basic and acidic residues predominate over residues 1–15 (MQRQTGHMEDKKRTG). Positions 1–32 (MQRQTGHMEDKKRTGLESQGTENAFSDGRDGK) are disordered.

This is an uncharacterized protein from Gallus gallus (Chicken).